The primary structure comprises 668 residues: tRNA 5-methylaminomethyl-2-thiouridine biosynthesis bifunctional protein MnmC (668 aa).

The interval 1–245 (MKHYAIQPAN…KREMLCGVME (245 aa)) is tRNA (mnm(5)s(2)U34)-methyltransferase. Residues 270–668 (IGGGIASALL…LLKGKAVKAG (399 aa)) form an FAD-dependent cmnm(5)s(2)U34 oxidoreductase region.

In the N-terminal section; belongs to the methyltransferase superfamily. tRNA (mnm(5)s(2)U34)-methyltransferase family. The protein in the C-terminal section; belongs to the DAO family. The cofactor is FAD.

Its subcellular location is the cytoplasm. It catalyses the reaction 5-aminomethyl-2-thiouridine(34) in tRNA + S-adenosyl-L-methionine = 5-methylaminomethyl-2-thiouridine(34) in tRNA + S-adenosyl-L-homocysteine + H(+). Functionally, catalyzes the last two steps in the biosynthesis of 5-methylaminomethyl-2-thiouridine (mnm(5)s(2)U) at the wobble position (U34) in tRNA. Catalyzes the FAD-dependent demodification of cmnm(5)s(2)U34 to nm(5)s(2)U34, followed by the transfer of a methyl group from S-adenosyl-L-methionine to nm(5)s(2)U34, to form mnm(5)s(2)U34. The polypeptide is tRNA 5-methylaminomethyl-2-thiouridine biosynthesis bifunctional protein MnmC (Escherichia coli O139:H28 (strain E24377A / ETEC)).